A 363-amino-acid chain; its full sequence is Cytoplasmic tRNA 2-thiolation protein 1 (363 aa).

The segment at 337–363 is disordered; it reads DGDCEQQATRSERNRSSLQGKHGNFDF.

Belongs to the TtcA family. CTU1/NCS6/ATPBD3 subfamily.

The protein localises to the cytoplasm. It participates in tRNA modification; 5-methoxycarbonylmethyl-2-thiouridine-tRNA biosynthesis. In terms of biological role, plays a central role in 2-thiolation of mcm(5)S(2)U at tRNA wobble positions of tRNA(Lys), tRNA(Glu) and tRNA(Gln). Directly binds tRNAs and probably acts by catalyzing adenylation of tRNAs, an intermediate required for 2-thiolation. It is unclear whether it acts as a sulfurtransferase that transfers sulfur from thiocarboxylated URM1 onto the uridine of tRNAs at wobble position. In Oryza sativa subsp. japonica (Rice), this protein is Cytoplasmic tRNA 2-thiolation protein 1.